Here is a 208-residue protein sequence, read N- to C-terminus: Methenyltetrahydrofolate cyclohydrolase (208 aa).

A helical membrane pass occupies residues 25 to 46 (GAAAISGAMGAALVSMVCNLTI).

The protein belongs to the cyclodeaminase/cyclohydrolase family. Homodimer.

It is found in the membrane. The catalysed reaction is (6R)-5,10-methenyltetrahydrofolate + H2O = (6R)-10-formyltetrahydrofolate + H(+). The protein operates within one-carbon metabolism; formaldehyde assimilation via serine pathway. Its function is as follows. Required for both C1 and C2 metabolism. The protein is Methenyltetrahydrofolate cyclohydrolase (fchA) of Methylorubrum extorquens (strain ATCC 14718 / DSM 1338 / JCM 2805 / NCIMB 9133 / AM1) (Methylobacterium extorquens).